The following is a 557-amino-acid chain: Organic cation/carnitine transporter 2 (557 aa).

Residues Met1 to Leu20 are Cytoplasmic-facing. Residues Ile21–Phe41 form a helical membrane-spanning segment. Topologically, residues Leu42 to Ala142 are extracellular. N-linked (GlcNAc...) asparagine glycosylation is found at Asn57, Asn64, and Asn91. The chain crosses the membrane as a helical span at residues Pro143 to Leu163. The Cytoplasmic portion of the chain corresponds to Ser164–Val172. A helical transmembrane segment spans residues Leu173–Phe193. Over Glu194–Thr197 the chain is Extracellular. A helical transmembrane segment spans residues Val198–Gly218. An ATP-binding site is contributed by Gly218–Ser225. The Cytoplasmic portion of the chain corresponds to Thr219–Thr232. The helical transmembrane segment at Leu233–Ile253 threads the bilayer. Residues Arg254–Arg257 lie on the Extracellular side of the membrane. Residues Met258–Pro278 traverse the membrane as a helical segment. Residues Glu279–Arg341 are Cytoplasmic-facing. A helical membrane pass occupies residues Val342 to Ser362. Over Leu363–Tyr373 the chain is Extracellular. The chain crosses the membrane as a helical span at residues Val374 to Leu394. The Cytoplasmic portion of the chain corresponds to Gln395–Ala406. The helical transmembrane segment at Leu407 to Leu427 threads the bilayer. The Extracellular segment spans residues Ser428–Ala430. The chain crosses the membrane as a helical span at residues Leu431–Ala451. Topologically, residues Glu452–Gly462 are cytoplasmic. A helical transmembrane segment spans residues Val463–Leu483. Over Gly484–Arg488 the chain is Extracellular. Tyr486 is subject to Phosphotyrosine. A helical membrane pass occupies residues Phe489–Phe509. Residues Pro510–Phe557 are Cytoplasmic-facing. Ser548 carries the phosphoserine modification. Thr550 is modified (phosphothreonine).

This sequence belongs to the major facilitator (TC 2.A.1) superfamily. Organic cation transporter (TC 2.A.1.19) family. As to quaternary structure, interacts with PDZK1. As to expression, widely expressed. Expressed in kidney, liver and testis. Expressed at the brush border of the small, large intestine and colon (at protein level).

The protein localises to the apical cell membrane. The protein resides in the basal cell membrane. It is found in the cell membrane. The catalysed reaction is (R)-carnitine(out) + Na(+)(out) = (R)-carnitine(in) + Na(+)(in). The enzyme catalyses glycine betaine(out) + Na(+)(out) = glycine betaine(in) + Na(+)(in). It catalyses the reaction glycine betaine(out) + (R)-carnitine(in) = glycine betaine(in) + (R)-carnitine(out). It carries out the reaction O-butanoyl-(R)-carnitine(out) + Na(+)(out) = O-butanoyl-(R)-carnitine(in) + Na(+)(in). The catalysed reaction is O-acetyl-(R)-carnitine(out) + Na(+)(out) = O-acetyl-(R)-carnitine(in) + Na(+)(in). The enzyme catalyses O-propanoyl-(R)-carnitine(out) + Na(+)(out) = O-propanoyl-(R)-carnitine(in) + Na(+)(in). It catalyses the reaction (S)-carnitine(out) + Na(+)(out) = (S)-carnitine(in) + Na(+)(in). It carries out the reaction an O-acyl-(R)-carnitine(out) + Na(+)(out) = an O-acyl-(R)-carnitine(in) + Na(+)(in). The catalysed reaction is L-glutamyl-L-arginyl-glycyl-L-methionyl-L-threonine(out) + Na(+)(out) = L-glutamyl-L-arginyl-glycyl-L-methionyl-L-threonine(in) + Na(+)(in). The enzyme catalyses N,N-dimethylglycine(out) + Na(+)(out) = N,N-dimethylglycine(in) + Na(+)(in). Inhibited by emetine, quinidine and verapamil. The IC(50) of emetine is 4.2 uM. Not inhibited by valproic acid. Transport of (R)-carnitine is stimulated by cholesterol in the plasma membrane. Functionally, sodium-ion dependent, high affinity carnitine transporter. Involved in the active cellular uptake of carnitine. Transports one sodium ion with one molecule of carnitine. Also transports organic cations such as tetraethylammonium (TEA) without the involvement of sodium. Also relative uptake activity ratio of carnitine to TEA is 11.3. May also contribute to regulate the transport of organic compounds in testis across the blood-testis-barrier. The sequence is that of Organic cation/carnitine transporter 2 from Mus musculus (Mouse).